The chain runs to 434 residues: Double-stranded RNA-binding protein 2 (434 aa).

2 consecutive DRBM domains span residues Met-1–Asn-70 and Val-87–Gln-155. Residues Glu-402 to Ile-434 form a disordered region.

As to quaternary structure, heterodimer with DRB1 or DRB5. Interacts with DCL1 and DCL5.

It is found in the cytoplasm. In terms of biological role, binds double-stranded RNA. May be involved in RNA-mediated silencing. The polypeptide is Double-stranded RNA-binding protein 2 (DRB2) (Arabidopsis thaliana (Mouse-ear cress)).